The primary structure comprises 614 residues: Sodium- and chloride-dependent betaine transporter (614 aa).

Topologically, residues 1–44 (MDGKVAVQECGPPAVSWVPEEGEKLDQEDEDQVKDRGQWTNKME) are cytoplasmic. 3 helical membrane passes run 45–65 (FVLS…FPYL), 73–92 (AFFI…VFFL), and 117–137 (GIGL…IIIL). At 138–210 (AWALFYLFSS…SGIHDLGSLR (73 aa)) the chain is on the extracellular side. A disulfide bond links C157 and C166. 2 N-linked (GlcNAc...) asparagine glycosylation sites follow: N171 and N183. Transmembrane regions (helical) follow at residues 211–229 (WELA…FCIW), 238–255 (VVYF…ILLI), 291–308 (IFFS…LGSY), 320–341 (IALC…FSIL), 374–393 (MPLS…FLGL), 423–441 (LLIL…FLVT), 458–478 (GICL…VYGA), 499–518 (ISWL…FSLS), and 538–556 (IGWF…FVVI). Residues 557–614 (TLLKTRGPFRKRLRQLITPDSSLPQPKQHPCLDGSAGRNFGPSPTREGLIAGEKETHL) are Cytoplasmic-facing. A disordered region spans residues 576-614 (DSSLPQPKQHPCLDGSAGRNFGPSPTREGLIAGEKETHL).

This sequence belongs to the sodium:neurotransmitter symporter (SNF) (TC 2.A.22) family. SLC6A12 subfamily. As to quaternary structure, interacts with LIN7C. As to expression, expressed in kidney, liver, heart, skeletal muscle, placenta, and a widespread distribution in the brain.

It is found in the basolateral cell membrane. The protein resides in the cell membrane. The enzyme catalyses 4-aminobutanoate(out) + chloride(out) + 3 Na(+)(out) = 4-aminobutanoate(in) + chloride(in) + 3 Na(+)(in). The catalysed reaction is glycine betaine(out) + 2 chloride(out) + 3 Na(+)(out) = glycine betaine(in) + 2 chloride(in) + 3 Na(+)(in). Transporter that mediates cellular uptake of betaine and GABA in a sodium- and chloride-dependent process. May have a role in regulation of GABAergic transmission in the brain through the reuptake of GABA into presynaptic terminals, as well as in osmotic regulation. Probably also involved in renal and hepatic osmotic regulation. The chain is Sodium- and chloride-dependent betaine transporter from Homo sapiens (Human).